The primary structure comprises 341 residues: Cyclin-Y (341 aa).

Residue G2 is the site of N-myristoyl glycine attachment. Phosphoserine is present on residues S21 and S25. T30 carries the phosphothreonine modification. A Phosphoserine modification is found at S33. T37 carries the phosphothreonine modification. T67 is modified (phosphothreonine; by CDK14). Phosphoserine; by CDK14 is present on residues S71 and S73. Residue T75 is modified to Phosphothreonine. S83 bears the Phosphoserine; by CDK14 mark. A phosphoserine mark is found at S99, S100, and S102. One can recognise a Cyclin N-terminal domain in the interval 143–265; that stretch reads DIFDENLHPL…FLELLQFNIN (123 aa). Position 280 is a phosphoserine (S280). Phosphoserine; by CDK14 is present on residues S288 and S295. Phosphoserine is present on residues S324 and S326. T331 bears the Phosphothreonine mark.

Belongs to the cyclin family. Cyclin Y subfamily. As to quaternary structure, found in a complex with CAPRIN2, LRP6 and CDK14 during G2/M stage; CAPRIN2 functions as a scaffold for the complex by binding to CCNY via its N terminus and to CDK14 via its C terminus. Interacts with CDK14. Interacts with CDK16. Interacts with LRP6. Post-translationally, ubiquitinated; leading to its degradation. Heavily phosphorylated. Phosphorylation at Ser-71 and Ser-73 by CDK14 is enhanced during the G2 and M cell cycle phases, and creates a phosphodegron triggering SCF-dependent ubiquitination. Widely expressed.

The protein localises to the cell membrane. Its subcellular location is the nucleus. Its function is as follows. Positive regulatory subunit of the cyclin-dependent kinases CDK14/PFTK1 and CDK16. Acts as a cell-cycle regulator of Wnt signaling pathway during G2/M phase by recruiting CDK14/PFTK1 to the plasma membrane and promoting phosphorylation of LRP6, leading to the activation of the Wnt signaling pathway. Recruits CDK16 to the plasma membrane. Isoform 3 might play a role in the activation of MYC-mediated transcription. The sequence is that of Cyclin-Y (CCNY) from Homo sapiens (Human).